A 273-amino-acid polypeptide reads, in one-letter code: Transposon Tn7 transposition protein TnsA (273 aa).

Catalysis depends on residues glutamate 63 and glutamate 73. The segment at residues 90–108 (TRQIAIDSGIKHPVIRGVD) is a DNA-binding region (H-T-H motif). Aspartate 114 is an active-site residue. Mg(2+)-binding residues include aspartate 114, glutamine 130, and valine 131. The active site involves lysine 132.

Heteromer with TnsB. Interacts with TnsC (via C-terminus); this interaction allows TnsA to bind donor DNA. It depends on Mg(2+) as a cofactor. Mn(2+) serves as cofactor.

Required for Tn7 transposition. Forms the transposase, together with TnsB. TnsA executes the 5'-DNA strand breakage reaction. TnsABC and TnsD promote high-frequency insertion of Tn7 into a specific target site known as att-Tn7 whereas TnsABC and TnsE promote low-frequency insertion into many different sites. This Escherichia coli protein is Transposon Tn7 transposition protein TnsA.